A 141-amino-acid chain; its full sequence is Large ribosomal subunit protein uL11 (141 aa).

Residues 1–23 (MAKQVTGQAKFQVPGGQATPAPP) form a disordered region.

The protein belongs to the universal ribosomal protein uL11 family. Part of the ribosomal stalk of the 50S ribosomal subunit. Interacts with L10 and the large rRNA to form the base of the stalk. L10 forms an elongated spine to which L12 dimers bind in a sequential fashion forming a multimeric L10(L12)X complex. One or more lysine residues are methylated.

Its function is as follows. Forms part of the ribosomal stalk which helps the ribosome interact with GTP-bound translation factors. The chain is Large ribosomal subunit protein uL11 from Rhodopirellula baltica (strain DSM 10527 / NCIMB 13988 / SH1).